The following is a 714-amino-acid chain: MTSMSTAATIKLPYQQQQHHLINSNNSYIQQQQQSPQQHHQQSVNINNCNNNTNNNNNNNNNNNNNNNNNNNNNNNNNNNNNNNNINNNNNNNNKQIPQQSIQTHANSILQLNKTMPHVNPPQQNHIMNQQQQQQQQQHYQQQQHPHQQQHPHQQQHPHQQQHPHQQQHPHQQQIQQQQQQQQQQQQQQQQQQQQQQQQQQPQQQQPQTQSTQERKWDEIKIYSDLIKRFALEASHLTISKENYDDLYNMAFCLFKTVDSMDPDKMPMNMGGNSRKNSFDMYNNNNNNNNNNNINNNNNNNNNNNINNNNNNNNNNNNNNNIVYNPYGNDGPTIPSPHLQHQQQHQQQQHQQQHQQQHQQQQQHQQQQQQQQQQQQQQQQQQQQQQQQQQQQQQQQQQQPQYHNGMPHHMQQHSPESMDHQRIVKLPTGNQNNNYSNDYYSIQAVHSPHLGPSMHLQQQQQNQQNQQIQQQHQQIQHQQQYSQLPIEQQQQMMLQQQQQQQQQQQQQQQQQQQQQQLQQQQHHQQQQIQQQQQSIAKQQMPQQQNTPNNGSPSSSDGKSPVNSNTAITSNNNNNNNNNNNNNNNNNNNSTTPVADPQKNFSGEVFFDDIGQDKPQRRRRRTMYSSRRNLKCHYCEVTETPEWRRGPDGDHTLCNACGLHYAKSQKKLAREKELEKQKELEREKERENTRKHSIDFMLMNDTSSAPTNSQNPTPN.

6 disordered regions span residues 28 to 97 (YIQQ…NKQI), 115 to 180 (TMPH…QQQQ), 266 to 362 (MPMN…QQQQ), 394 to 419 (QQQQ…ESMD), 454 to 476 (MHLQ…QQIQ), and 528 to 621 (IQQQ…RRRT). 2 stretches are compositionally biased toward low complexity: residues 30–94 (QQQQ…NNNN) and 130–147 (QQQQ…QHPH). Residues 148–168 (QQQHPHQQQHPHQQQHPHQQQ) are compositionally biased toward basic residues. Low complexity predominate over residues 169–180 (HPHQQQIQQQQQ). Positions 271-282 (GGNSRKNSFDMY) are enriched in polar residues. Low complexity-rich tracts occupy residues 283-322 (NNNN…NNNI) and 340-362 (QHQQ…QQQQ). 2 stretches are compositionally biased toward low complexity: residues 457 to 476 (QQQQ…QQIQ) and 528 to 549 (IQQQ…TPNN). Over residues 550 to 569 (GSPSSSDGKSPVNSNTAITS) the composition is skewed to polar residues. Positions 570 to 588 (NNNNNNNNNNNNNNNNNNN) are enriched in low complexity. Residues 631 to 656 (CHYCEVTETPEWRRGPDGDHTLCNAC) form a GATA-type zinc finger. A coiled-coil region spans residues 661–694 (AKSQKKLAREKELEKQKELEREKERENTRKHSID). Basic and acidic residues predominate over residues 667–693 (LAREKELEKQKELEREKERENTRKHSI). The disordered stretch occupies residues 667 to 714 (LAREKELEKQKELEREKERENTRKHSIDFMLMNDTSSAPTNSQNPTPN). Residues 699–714 (NDTSSAPTNSQNPTPN) show a composition bias toward polar residues.

In Dictyostelium discoideum (Social amoeba), this protein is GATA zinc finger domain-containing protein 10 (gtaJ).